Reading from the N-terminus, the 234-residue chain is Orotidine 5'-phosphate decarboxylase (234 aa).

Substrate contacts are provided by residues aspartate 14, lysine 36, 63 to 72, threonine 123, arginine 184, glutamine 193, glycine 213, and arginine 214; that span reads DLKFHDIPNT. The Proton donor role is filled by lysine 65.

The protein belongs to the OMP decarboxylase family. Type 1 subfamily. Homodimer.

It catalyses the reaction orotidine 5'-phosphate + H(+) = UMP + CO2. It functions in the pathway pyrimidine metabolism; UMP biosynthesis via de novo pathway; UMP from orotate: step 2/2. Its function is as follows. Catalyzes the decarboxylation of orotidine 5'-monophosphate (OMP) to uridine 5'-monophosphate (UMP). This chain is Orotidine 5'-phosphate decarboxylase, found in Pseudoalteromonas translucida (strain TAC 125).